Consider the following 535-residue polypeptide: Peptide chain release factor 3 (535 aa).

Residues 8 to 278 (ARRRTFAIIS…VDQAPAPGPR (271 aa)) enclose the tr-type G domain. Residues 17–24 (SHPDAGKT), 85–89 (DTPGH), and 139–142 (NKLD) contribute to the GTP site.

This sequence belongs to the TRAFAC class translation factor GTPase superfamily. Classic translation factor GTPase family. PrfC subfamily.

The protein localises to the cytoplasm. Increases the formation of ribosomal termination complexes and stimulates activities of RF-1 and RF-2. It binds guanine nucleotides and has strong preference for UGA stop codons. It may interact directly with the ribosome. The stimulation of RF-1 and RF-2 is significantly reduced by GTP and GDP, but not by GMP. This Bordetella bronchiseptica (strain ATCC BAA-588 / NCTC 13252 / RB50) (Alcaligenes bronchisepticus) protein is Peptide chain release factor 3.